Consider the following 735-residue polypeptide: MIPPQEASARRREIEDKLKQEEETLSFIRDSLEKSDQLTKNMVSILSSFESRLMKLENSIIPVHKQTENLQRLQENVEKTLSCLDHVISYYHVASDTEKIIREGPTGRLEEYLGSMAKIQKAVEYFQDNSPDSPELNKVKLLFERGKEALESEFRSLMTRHSKVVSPVLILDLISGDDDLEAQEDVTLEHLPESVLQDVIRISRWLVEYGRNQDFMNVYYQIRSSQLDRSIKGLKEHFHKSSSSSGVPYSPAIPNKRKDTPTKKPVKRPGTIRKAQNLLKQYSQHGLDGKKGGSNLIPLEGLLPCTPRGGLPGPWINAACVCAADISPGHEHDFRVKHLSEALNDKHGPLAGRDDMLDVETDAYIHCVSAFVKLAQSEYQLLADIIPEHHQKKTFDSLIQDALDGLMLEGENIVSAARKAIVRHDFSTVLTVFPILRHLKQTKPEFDQVLQGTAASTKNKLPGLITSMETIGAKALEDFADNIKNDPDKEYNMPKDGTVHELTSNAILFLQQLLDFQETAGAMLASQETSSSATSYSSEFSKRLLSTYICKVLGNLQLNLLSKSKVYEDPALSAIFLHNNYNYILKSLEKSELIQLVAVTQKTAERSYREHIEQQIQTYQRSWLKVTDYIAEKNLPVFQPGVKLRDKERQIIKERFKGFNDGLEELCKIQKAWAIPDTEQRDRIRQAQKTIVKETYGAFLQKFGSVPFTKNPEKYIKYGVEQVGDMIDRLFDTSA.

Coiled-coil stretches lie at residues 5–42 (QEAS…TKNM) and 63–85 (VHKQ…SCLD). Residue Ser-133 is modified to Phosphoserine. The interval 239 to 268 (HKSSSSSGVPYSPAIPNKRKDTPTKKPVKR) is disordered.

This sequence belongs to the EXO70 family. In terms of assembly, the exocyst complex is composed of EXOC1, EXOC2, EXOC3, EXOC4, EXOC5, EXOC6, EXOC7 and EXOC8. Interacts with ARHQ in a GTP-dependent manner. Interacts with RAB11FIP3. In terms of tissue distribution, abundant in the ventricular zone, the outer subventricular zone and the cortical plate of the fetal cortex.

It localises to the cytoplasm. It is found in the cytosol. The protein localises to the cell membrane. Its subcellular location is the midbody. The protein resides in the midbody ring. Its function is as follows. Component of the exocyst complex involved in the docking of exocytic vesicles with fusion sites on the plasma membrane. In adipocytes, plays a crucial role in targeting SLC2A4 vesicle to the plasma membrane in response to insulin, perhaps directing the vesicle to the precise site of fusion. It is required for neuron survival and plays an essential role in cortical development. The chain is Exocyst complex component 7 (EXOC7) from Homo sapiens (Human).